Here is a 93-residue protein sequence, read N- to C-terminus: Defensin 5 (93 aa).

Residues 1–19 (MKKLVLLSALVLLALQVEA) form the signal peptide. A propeptide spanning residues 20–58 (EPTPKTDEGTKTDEQPGKEDQVVSVSIEGQGDPAFQDAV) is cleaved from the precursor. 3 cysteine pairs are disulfide-bonded: cysteine 64/cysteine 92, cysteine 66/cysteine 81, and cysteine 71/cysteine 91.

Belongs to the alpha-defensin family. Small intestine. Not present in heart, liver, spleen, kidney, large intestine and colon.

The protein localises to the secreted. Its function is as follows. Probably contributes to the antimicrobial barrier function of the small intestine. The chain is Defensin 5 from Rattus norvegicus (Rat).